A 500-amino-acid polypeptide reads, in one-letter code: Keratin, type II cuticular Hb1 (500 aa).

The interval 1–106 (MTCGSGFRGR…PNAQCVKQEE (106 aa)) is head. In terms of domain architecture, IF rod spans 106 to 417 (EKEQIKCLNN…RLLEGEEQRL (312 aa)). The coil 1A stretch occupies residues 107 to 141 (KEQIKCLNNRFAAFIDKVRFLEQQNKLLETKLQFY). A linker 1 region spans residues 142-151 (QNRQCCESNL). The coil 1B stretch occupies residues 152-252 (EPLFNGYIET…YEEEIRVLQA (101 aa)). Lys212 is covalently cross-linked (Glycyl lysine isopeptide (Lys-Gly) (interchain with G-Cter in SUMO1)). Residues 253-269 (HISDTSVIVKMDNSRDL) are linker 12. The coil 2 stretch occupies residues 270–413 (NMDNIVAEIK…ATYRRLLEGE (144 aa)). Residues 414 to 500 (EQRLCEGVGS…GSCASVCRKC (87 aa)) form a tail region.

Belongs to the intermediate filament family. As to quaternary structure, heterotetramer of two type I and two type II keratins.

This chain is Keratin, type II cuticular Hb1, found in Bos taurus (Bovine).